Consider the following 508-residue polypeptide: Serum response factor (508 aa).

A compositionally biased stretch (low complexity) spans Met1–Gly28. Residues Met1–Gly97 are disordered. Positions Arg29–Pro53 are enriched in gly residues. Over residues Ala61–Glu80 the composition is skewed to low complexity. Phosphoserine occurs at positions 77, 79, 83, 85, and 103. Residues Gly81–Leu91 show a composition bias toward acidic residues. Residues Gly133–Pro222 mediate DNA binding. The region spanning Arg141–Lys201 is the MADS-box domain. Residues Ile168 to Pro222 are involved in dimerization. The tract at residues Leu219–Gly240 is disordered. Phosphoserine occurs at positions 224 and 253. Residues Ser277, Ser307, Ser309, Ser316, and Ser383 are each glycosylated (O-linked (GlcNAc) serine). Positions Val362–Ser385 are disordered. Phosphoserine; by dsDNA kinase occurs at positions 435 and 446.

As to quaternary structure, binds DNA as a multimer, probably a dimer. Interacts with MRTFA, forming the SRF-MRTFA nuclear complex which binds the 5'-CArG-3' consensus motif (CArG box) on DNA via SRF. Forms a nuclear ternary complex with MRTFA and SCAI. Interacts with MRTFB. Interacts with MLLT7/FOXO4, NKX3A and SSRP1. Interacts with ARID2. Interacts with SRFBP1. Interacts with FOXK1. Interacts with LPXN. Interacts with OLFM2; the interaction promotes dissociation of SRF from the transcriptional repressor HEY2, facilitates binding of SRF to target genes and promotes smooth muscle differentiation. Interacts with NKX3-1. Interacts with KAT5. Interacts with PURB. In terms of processing, phosphorylated by PRKDC.

Its subcellular location is the nucleus. Its function is as follows. SRF is a transcription factor that binds to the serum response element (SRE), a short sequence of dyad symmetry located 300 bp to the 5' of the site of transcription initiation of some genes (such as FOS). Together with MRTFA transcription coactivator, controls expression of genes regulating the cytoskeleton during development, morphogenesis and cell migration. The SRF-MRTFA complex activity responds to Rho GTPase-induced changes in cellular globular actin (G-actin) concentration, thereby coupling cytoskeletal gene expression to cytoskeletal dynamics. Required for cardiac differentiation and maturation. This Homo sapiens (Human) protein is Serum response factor (SRF).